Consider the following 125-residue polypeptide: Glutamyl-tRNA(Gln) amidotransferase subunit C, mitochondrial (125 aa).

This sequence belongs to the GatC family. Subunit of the heterotrimeric GatCAB amidotransferase (AdT) complex, composed of A, B and C subunits.

It is found in the mitochondrion. The catalysed reaction is L-glutamyl-tRNA(Gln) + L-glutamine + ATP + H2O = L-glutaminyl-tRNA(Gln) + L-glutamate + ADP + phosphate + H(+). In terms of biological role, allows the formation of correctly charged Gln-tRNA(Gln) through the transamidation of misacylated Glu-tRNA(Gln) in the mitochondria. The reaction takes place in the presence of glutamine and ATP through an activated gamma-phospho-Glu-tRNA(Gln). This is Glutamyl-tRNA(Gln) amidotransferase subunit C, mitochondrial from Drosophila mojavensis (Fruit fly).